The sequence spans 182 residues: Ribulose bisphosphate carboxylase small subunit, chloroplastic 5 (182 aa).

A chloroplast-targeting transit peptide spans 1–49 (MASSLMSNAATTMAAATTTAQANMVAPFNGLKSISAFPVTRKNNDITSV).

The protein belongs to the RuBisCO small chain family. Heterohexadecamer of 8 large and 8 small subunits.

The protein localises to the plastid. The protein resides in the chloroplast. Functionally, ruBisCO catalyzes two reactions: the carboxylation of D-ribulose 1,5-bisphosphate, the primary event in carbon dioxide fixation, as well as the oxidative fragmentation of the pentose substrate. Both reactions occur simultaneously and in competition at the same active site. Although the small subunit is not catalytic it is essential for maximal activity. This is Ribulose bisphosphate carboxylase small subunit, chloroplastic 5 from Mesembryanthemum crystallinum (Common ice plant).